The sequence spans 507 residues: Maturase K (507 aa).

This sequence belongs to the intron maturase 2 family. MatK subfamily.

The protein resides in the plastid. It localises to the chloroplast. Its function is as follows. Usually encoded in the trnK tRNA gene intron. Probably assists in splicing its own and other chloroplast group II introns. This Robinia pseudoacacia (Black locust) protein is Maturase K.